Here is a 609-residue protein sequence, read N- to C-terminus: Vanadium chloroperoxidase (609 aa).

K353, R360, S402, G403, H404, R490, and H496 together coordinate vanadate. H404 (proton donor) is an active-site residue. Positions 569-609 (KPTPPEIQPMPQETPVQKPVGQQPVKGMWEEEQAPVVKEAP) are disordered.

The protein belongs to the vanadium-dependent haloperoxidase family. As to quaternary structure, homotetramer. Vanadate is required as a cofactor. Post-translationally, the N-terminus is blocked.

The protein resides in the secreted. It catalyses the reaction RH + Cl(-) + H2O2 = RCl + 2 H2O.. Its function is as follows. Catalyzes the oxidation of chloride in the presence of hydrogen peroxide to hypochlorous acid (ClOH), which in turn can react with a nucleophilic acceptor (RH), to form a chlorinated compound. In Curvularia inaequalis (Helminthosporium inaequale), this protein is Vanadium chloroperoxidase (CPO).